The sequence spans 429 residues: Glutamate-1-semialdehyde 2,1-aminomutase 2 (429 aa).

Lysine 268 is subject to N6-(pyridoxal phosphate)lysine.

It belongs to the class-III pyridoxal-phosphate-dependent aminotransferase family. HemL subfamily. In terms of assembly, homodimer. Pyridoxal 5'-phosphate is required as a cofactor.

It is found in the cytoplasm. The catalysed reaction is (S)-4-amino-5-oxopentanoate = 5-aminolevulinate. It functions in the pathway porphyrin-containing compound metabolism; protoporphyrin-IX biosynthesis; 5-aminolevulinate from L-glutamyl-tRNA(Glu): step 2/2. The chain is Glutamate-1-semialdehyde 2,1-aminomutase 2 from Bacillus cereus (strain AH820).